The following is a 258-amino-acid chain: Chemokine-binding protein (258 aa).

The first 17 residues, 1 to 17 (MKQYIVLACMCLAAAAM), serve as a signal peptide directing secretion. The tract at residues 65-93 (TEITESESDPDPEVESEDDSTSVEDVDPP) is disordered. Acidic residues predominate over residues 68 to 91 (TESESDPDPEVESEDDSTSVEDVD).

It belongs to the orthopoxvirus OPG001 family. In terms of assembly, binds to host CC chemokines, such as RANTES/CCL5, MIP-1alpha/CCL3, MCP-1/CCL2 and eotaxin.

Its subcellular location is the secreted. Inhibits host immune defense by binding to host chemokines. Binds host CC chemokines (beta chemokines) such as RANTES with high affinity, but not CXC or C chemokines (alpha and gamma chemokines). This chain is Chemokine-binding protein (OPG001), found in Homo sapiens (Human).